Reading from the N-terminus, the 202-residue chain is Protein lin-28 homolog A (202 aa).

The disordered stretch occupies residues 1-31; that stretch reads MGSVSNQQFAGAKPGEEPSGDSPKAENESQP. The CSD domain maps to 33 to 106; it reads HGSGICKWFN…GLESIRVTGP (74 aa). The segment at 107-130 is flexible linker; that stretch reads GGVFCIGSERRPKSKSLQKRRSKG. 2 CCHC-type zinc fingers span residues 131 to 148 and 153 to 170; these read DRCY…ECKL and KKCH…NCPA. 8 residues coordinate Zn(2+): Cys-133, Cys-136, His-141, Cys-146, Cys-155, Cys-158, His-163, and Cys-168. The interval 169-202 is disordered; it reads PAKAQQSPSSQGKPAYFREKEDMHSSALLPETRE.

The protein belongs to the lin-28 family. In terms of assembly, monomer.

Its subcellular location is the cytoplasm. The protein localises to the rough endoplasmic reticulum. It localises to the P-body. It is found in the stress granule. The protein resides in the nucleus. Its subcellular location is the nucleolus. Its function is as follows. RNA-binding protein that inhibits processing of pre-let-7 miRNAs and regulates translation of mRNAs that control developmental timing, pluripotency and metabolism. Seems to recognize a common structural G-quartet (G4) feature in its miRNA and mRNA targets. 'Translational enhancer' that drives specific mRNAs to polysomes and increases the efficiency of protein synthesis. Its association with the translational machinery and target mRNAs results in an increased number of initiation events per molecule of mRNA and, indirectly, in mRNA stabilization. Suppressor of microRNA (miRNA) biogenesis, including that of let-7. Binds specific target miRNA precursors (pre-miRNAs), recognizing an 5'-GGAG-3' motif found in their terminal loop, and recruits uridylyltransferase. This results in the terminal uridylation of target pre-miRNAs. Uridylated pre-miRNAs fail to be processed by Dicer and undergo degradation. Localized to the periendoplasmic reticulum area, binds to a large number of spliced mRNAs and inhibits the translation of mRNAs destined for the ER, reducing the synthesis of transmembrane proteins, ER or Golgi lumen proteins, and secretory proteins. Binds to and enhances the translation of mRNAs for several metabolic enzymes, increasing glycolysis and oxidative phosphorylation. Which, with the let-7 repression may enhance tissue repair in adult tissue. This chain is Protein lin-28 homolog A (LIN28A), found in Gallus gallus (Chicken).